Here is a 173-residue protein sequence, read N- to C-terminus: MADEGNIISNLNLEDGPVPNGADTSPAIGLISQYVKDLSVENPNAPESYQWAEAPDMAVDFNISARAIQPEIHEIELKINVTSKGAQGTAFIVELAYCGLIGMRNVPDDQAHPFLFAEGPRILFPFARRIIADAVRDAGYPPLMLEPIDFNGLYMQQLAQAQATAEATPAGEA.

Belongs to the SecB family. Homotetramer, a dimer of dimers. One homotetramer interacts with 1 SecA dimer.

It is found in the cytoplasm. Its function is as follows. One of the proteins required for the normal export of preproteins out of the cell cytoplasm. It is a molecular chaperone that binds to a subset of precursor proteins, maintaining them in a translocation-competent state. It also specifically binds to its receptor SecA. In Novosphingobium aromaticivorans (strain ATCC 700278 / DSM 12444 / CCUG 56034 / CIP 105152 / NBRC 16084 / F199), this protein is Protein-export protein SecB.